The following is a 289-amino-acid chain: 2-hydroxy-6-oxononadienedioate/2-hydroxy-6-oxononatrienedioate hydrolase (289 aa).

His269 acts as the Proton acceptor in catalysis.

Belongs to the AB hydrolase superfamily. MhpC family. As to quaternary structure, homodimer.

The enzyme catalyses (2Z,4E)-2-hydroxy-6-oxonona-2,4-dienedioate + H2O = (2Z)-2-hydroxypenta-2,4-dienoate + succinate + H(+). The catalysed reaction is (2Z,4E,7E)-2-hydroxy-6-oxonona-2,4,7-trienedioate + H2O = (2Z)-2-hydroxypenta-2,4-dienoate + fumarate + H(+). The protein operates within aromatic compound metabolism; 3-phenylpropanoate degradation. Its function is as follows. Catalyzes the cleavage of the C5-C6 bond of 2-hydroxy-6-oxononadienedioate and 2-hydroxy-6-oxononatrienedioate, a dienol ring fission product of the bacterial meta-cleavage pathway for degradation of phenylpropionic acid. The chain is 2-hydroxy-6-oxononadienedioate/2-hydroxy-6-oxononatrienedioate hydrolase from Cupriavidus pinatubonensis (strain JMP 134 / LMG 1197) (Cupriavidus necator (strain JMP 134)).